Here is a 696-residue protein sequence, read N- to C-terminus: Probable glutamine--fructose-6-phosphate aminotransferase [isomerizing] (696 aa).

Residue Cys2 is the For GATase activity of the active site. A Glutamine amidotransferase type-2 domain is found at 2–303; the sequence is CGIFGYINYL…DDDIAHVRDG (302 aa). SIS domains lie at 375 to 514 and 547 to 686; these read YYDI…DSVS and AIEQ…VDQP.

It carries out the reaction D-fructose 6-phosphate + L-glutamine = D-glucosamine 6-phosphate + L-glutamate. Its pathway is nucleotide-sugar biosynthesis; UDP-N-acetyl-alpha-D-glucosamine biosynthesis; alpha-D-glucosamine 6-phosphate from D-fructose 6-phosphate: step 1/1. In terms of biological role, involved in amino sugar synthesis (formation of chitin, supplies the amino sugars of asparagine-linked oligosaccharides of glycoproteins). This chain is Probable glutamine--fructose-6-phosphate aminotransferase [isomerizing], found in Schizosaccharomyces pombe (strain 972 / ATCC 24843) (Fission yeast).